The primary structure comprises 160 residues: uncharacterized protein (160 aa).

It to A.fulgidus AF1717.

This is an uncharacterized protein from Bacillus subtilis (strain 168).